The primary structure comprises 407 residues: S-adenosylmethionine synthase (407 aa).

An ATP-binding site is contributed by histidine 21. Aspartate 23 provides a ligand contact to Mg(2+). Glutamate 49 lines the K(+) pocket. Positions 62 and 105 each coordinate L-methionine. The tract at residues 105–115 is flexible loop; that stretch reads QSQEIGAGVDA. Residues 179-181, aspartate 259, 265-266, alanine 282, and lysine 286 contribute to the ATP site; these read DGK and RK. An L-methionine-binding site is contributed by aspartate 259. Lysine 290 lines the L-methionine pocket.

This sequence belongs to the AdoMet synthase family. As to quaternary structure, homotetramer; dimer of dimers. The cofactor is Mg(2+). Requires K(+) as cofactor.

It is found in the cytoplasm. The enzyme catalyses L-methionine + ATP + H2O = S-adenosyl-L-methionine + phosphate + diphosphate. It participates in amino-acid biosynthesis; S-adenosyl-L-methionine biosynthesis; S-adenosyl-L-methionine from L-methionine: step 1/1. Functionally, catalyzes the formation of S-adenosylmethionine (AdoMet) from methionine and ATP. The overall synthetic reaction is composed of two sequential steps, AdoMet formation and the subsequent tripolyphosphate hydrolysis which occurs prior to release of AdoMet from the enzyme. The sequence is that of S-adenosylmethionine synthase from Corynebacterium aurimucosum (strain ATCC 700975 / DSM 44827 / CIP 107346 / CN-1) (Corynebacterium nigricans).